Reading from the N-terminus, the 269-residue chain is NAD kinase (269 aa).

Asp45 serves as the catalytic Proton acceptor. Residues 45-46 (DG), 121-122 (NE), Arg147, Asp149, 160-165 (TAYNRS), and Ala184 each bind NAD(+).

Belongs to the NAD kinase family. Requires a divalent metal cation as cofactor.

It localises to the cytoplasm. The enzyme catalyses NAD(+) + ATP = ADP + NADP(+) + H(+). In terms of biological role, involved in the regulation of the intracellular balance of NAD and NADP, and is a key enzyme in the biosynthesis of NADP. Catalyzes specifically the phosphorylation on 2'-hydroxyl of the adenosine moiety of NAD to yield NADP. This Pediococcus pentosaceus (strain ATCC 25745 / CCUG 21536 / LMG 10740 / 183-1w) protein is NAD kinase.